Here is a 425-residue protein sequence, read N- to C-terminus: Serine hydroxymethyltransferase (425 aa).

(6S)-5,6,7,8-tetrahydrofolate is bound by residues Leu122 and 126–128 (GHL). Lys231 carries the N6-(pyridoxal phosphate)lysine modification. 355–357 (SPF) is a (6S)-5,6,7,8-tetrahydrofolate binding site.

This sequence belongs to the SHMT family. In terms of assembly, homodimer. Pyridoxal 5'-phosphate is required as a cofactor.

The protein localises to the cytoplasm. It carries out the reaction (6R)-5,10-methylene-5,6,7,8-tetrahydrofolate + glycine + H2O = (6S)-5,6,7,8-tetrahydrofolate + L-serine. It functions in the pathway one-carbon metabolism; tetrahydrofolate interconversion. The protein operates within amino-acid biosynthesis; glycine biosynthesis; glycine from L-serine: step 1/1. Catalyzes the reversible interconversion of serine and glycine with tetrahydrofolate (THF) serving as the one-carbon carrier. This reaction serves as the major source of one-carbon groups required for the biosynthesis of purines, thymidylate, methionine, and other important biomolecules. Also exhibits THF-independent aldolase activity toward beta-hydroxyamino acids, producing glycine and aldehydes, via a retro-aldol mechanism. The chain is Serine hydroxymethyltransferase from Rippkaea orientalis (strain PCC 8801 / RF-1) (Cyanothece sp. (strain PCC 8801)).